Reading from the N-terminus, the 88-residue chain is Small ribosomal subunit protein uS17 (88 aa).

Belongs to the universal ribosomal protein uS17 family. Part of the 30S ribosomal subunit.

One of the primary rRNA binding proteins, it binds specifically to the 5'-end of 16S ribosomal RNA. The sequence is that of Small ribosomal subunit protein uS17 from Lactobacillus delbrueckii subsp. bulgaricus (strain ATCC 11842 / DSM 20081 / BCRC 10696 / JCM 1002 / NBRC 13953 / NCIMB 11778 / NCTC 12712 / WDCM 00102 / Lb 14).